Consider the following 240-residue polypeptide: Proteasome subunit beta type-1 (240 aa).

Met-1 bears the N-acetylmethionine mark. Residues Met-1–Met-27 constitute a propeptide that is removed on maturation. Ser-57 carries O-linked (GlcNAc) serine glycosylation. Residues Ser-61 and Ser-67 each carry the phosphoserine modification. Tyr-149 bears the Phosphotyrosine mark. Ser-161 bears the Phosphoserine mark. Lys-203 is subject to N6-acetyllysine. A glycan (O-linked (GlcNAc) serine) is linked at Ser-208.

This sequence belongs to the peptidase T1B family. The 26S proteasome consists of a 20S proteasome core and two 19S regulatory subunits. The 20S proteasome core is a barrel-shaped complex made of 28 subunits that are arranged in four stacked rings. The two outer rings are each formed by seven alpha subunits, and the two inner rings are formed by seven beta subunits. The proteolytic activity is exerted by three beta-subunits PSMB5, PSMB6 and PSMB7. Interacts with SERPINB2. Interacts with RFPL4A. In terms of tissue distribution, ubiquitous.

It is found in the cytoplasm. The protein resides in the nucleus. Functionally, non-catalytic component of the 20S core proteasome complex involved in the proteolytic degradation of most intracellular proteins. This complex plays numerous essential roles within the cell by associating with different regulatory particles. Associated with two 19S regulatory particles, forms the 26S proteasome and thus participates in the ATP-dependent degradation of ubiquitinated proteins. The 26S proteasome plays a key role in the maintenance of protein homeostasis by removing misfolded or damaged proteins that could impair cellular functions, and by removing proteins whose functions are no longer required. Associated with the PA200 or PA28, the 20S proteasome mediates ubiquitin-independent protein degradation. This type of proteolysis is required in several pathways including spermatogenesis (20S-PA200 complex) or generation of a subset of MHC class I-presented antigenic peptides (20S-PA28 complex). The polypeptide is Proteasome subunit beta type-1 (Psmb1) (Rattus norvegicus (Rat)).